Here is a 206-residue protein sequence, read N- to C-terminus: Large ribosomal subunit protein uL4 (206 aa).

This sequence belongs to the universal ribosomal protein uL4 family. As to quaternary structure, part of the 50S ribosomal subunit.

Its function is as follows. One of the primary rRNA binding proteins, this protein initially binds near the 5'-end of the 23S rRNA. It is important during the early stages of 50S assembly. It makes multiple contacts with different domains of the 23S rRNA in the assembled 50S subunit and ribosome. In terms of biological role, forms part of the polypeptide exit tunnel. The sequence is that of Large ribosomal subunit protein uL4 from Afipia carboxidovorans (strain ATCC 49405 / DSM 1227 / KCTC 32145 / OM5) (Oligotropha carboxidovorans).